A 272-amino-acid polypeptide reads, in one-letter code: Hydroxyethylthiazole kinase (272 aa).

Residue Met62 coordinates substrate. ATP is bound by residues Arg138 and Thr183. Gly210 serves as a coordination point for substrate.

Belongs to the Thz kinase family. Mg(2+) is required as a cofactor.

The catalysed reaction is 5-(2-hydroxyethyl)-4-methylthiazole + ATP = 4-methyl-5-(2-phosphooxyethyl)-thiazole + ADP + H(+). It participates in cofactor biosynthesis; thiamine diphosphate biosynthesis; 4-methyl-5-(2-phosphoethyl)-thiazole from 5-(2-hydroxyethyl)-4-methylthiazole: step 1/1. Functionally, catalyzes the phosphorylation of the hydroxyl group of 4-methyl-5-beta-hydroxyethylthiazole (THZ). This chain is Hydroxyethylthiazole kinase, found in Dichelobacter nodosus (strain VCS1703A).